A 223-amino-acid polypeptide reads, in one-letter code: UPF0441 protein YgiB (223 aa).

The segment covering 178–195 (TVPKTAMAPKPATTTTVT) has biased composition (low complexity). Residues 178 to 223 (TVPKTAMAPKPATTTTVTRGGFGESVAKQSTMQRSAAGTSTRSMGG) form a disordered region. The span at 204–223 (AKQSTMQRSAAGTSTRSMGG) shows a compositional bias: polar residues.

Belongs to the UPF0441 family.

The polypeptide is UPF0441 protein YgiB (Salmonella paratyphi A (strain ATCC 9150 / SARB42)).